A 423-amino-acid polypeptide reads, in one-letter code: Histidine--tRNA ligase (423 aa).

Belongs to the class-II aminoacyl-tRNA synthetase family. Homodimer.

It localises to the cytoplasm. The catalysed reaction is tRNA(His) + L-histidine + ATP = L-histidyl-tRNA(His) + AMP + diphosphate + H(+). This is Histidine--tRNA ligase from Haemophilus influenzae (strain 86-028NP).